The following is an 85-amino-acid chain: Alpha-mammal toxin AaH2 (85 aa).

A signal peptide spans 1–19 (MNYLVMISLALLFVTGVES). In terms of domain architecture, LCN-type CS-alpha/beta spans 21–83 (KDGYIVDDVN…VRTKGPGRCH (63 aa)). 4 disulfide bridges follow: cysteine 31-cysteine 82, cysteine 35-cysteine 55, cysteine 41-cysteine 65, and cysteine 45-cysteine 67. The residue at position 83 (histidine 83) is a Histidine amide.

Belongs to the long (4 C-C) scorpion toxin superfamily. Sodium channel inhibitor family. Alpha subfamily. In terms of processing, the amidation of His-83 is not necessary for toxicity. In terms of tissue distribution, expressed by the venom gland.

It is found in the secreted. In terms of biological role, alpha toxin that binds voltage-independently at site-3 of sodium channels (Nav), inhibits the inactivation of the activated channels, and weakly inhibits activation, thereby blocking neuronal transmission. Inserts into voltage-sensing domain IV to stabilize a deactivated state, thereby preventing fast-inactivation. Principally slows the inactivation process of TTX-sensitive sodium channels. It is active on mammalian brain Nav1.2/SCN2A (EC(50)human=0.72 nM, EC(50)rat=2.6 nM), on rat skeletal muscle Nav1.4/SCN4A (EC(50)=2.2 nM), and on human neuronal Nav1.7/SCN9A (EC(50)=6.8-51.7 nM). In vivo, intraplantar injection into mice induces spontaneous pain responses. The chain is Alpha-mammal toxin AaH2 from Androctonus australis (Sahara scorpion).